The primary structure comprises 93 residues: Small ribosomal subunit protein uS19 (93 aa).

It belongs to the universal ribosomal protein uS19 family.

Its function is as follows. Protein S19 forms a complex with S13 that binds strongly to the 16S ribosomal RNA. In Kocuria rhizophila (strain ATCC 9341 / DSM 348 / NBRC 103217 / DC2201), this protein is Small ribosomal subunit protein uS19.